Here is a 423-residue protein sequence, read N- to C-terminus: Glucoside xylosyltransferase 2 (423 aa).

The Cytoplasmic portion of the chain corresponds to 1–6 (MRFRWK). A helical; Signal-anchor for type II membrane protein transmembrane segment spans residues 7 to 26 (FFGSLLCVTGLLLVLYRQLG). Residues 27–423 (NVPQPPPGPA…RVVVHIRSDV (397 aa)) lie on the Lumenal side of the membrane. A disordered region spans residues 60–85 (RRDARQGGKKKTNWNNVRAPEQKPNP). N-linked (GlcNAc...) asparagine glycosylation is found at Asn-215 and Asn-256.

Belongs to the glycosyltransferase 8 family.

The protein localises to the membrane. The catalysed reaction is 3-O-(beta-D-glucosyl)-L-seryl-[EGF-like domain protein] + UDP-alpha-D-xylose = 3-O-[alpha-D-xylosyl-(1-&gt;3)-beta-D-glucosyl]-L-seryl-[EGF-like domain protein] + UDP + H(+). Its function is as follows. Glycosyltransferase which elongates the O-linked glucose attached to EGF-like repeats in the extracellular domain of Notch proteins by catalyzing the addition of xylose. This Xenopus laevis (African clawed frog) protein is Glucoside xylosyltransferase 2 (gxylt2).